The following is a 75-amino-acid chain: Endogenous retrovirus group K member 24 Np9 protein (75 aa).

The tract at residues 22 to 43 is disordered; that stretch reads TAPKRQRPSRTGHDDDGGFVEK. A compositionally biased stretch (basic and acidic residues) spans 32-43; the sequence is TGHDDDGGFVEK.

In terms of tissue distribution, transcript detectable in many tumor cell lines and tumor tissues.

The protein localises to the nucleus. May possess a function in tumorigenesis. The chain is Endogenous retrovirus group K member 24 Np9 protein (ERVK-24) from Homo sapiens (Human).